Reading from the N-terminus, the 89-residue chain is UPF0147 protein Saci_0891 (89 aa).

Belongs to the UPF0147 family.

This Sulfolobus acidocaldarius (strain ATCC 33909 / DSM 639 / JCM 8929 / NBRC 15157 / NCIMB 11770) protein is UPF0147 protein Saci_0891.